Consider the following 78-residue polypeptide: Defensin-like protein 287 (78 aa).

The first 24 residues, 1 to 24, serve as a signal peptide directing secretion; sequence MNNLRVIMSVLLAVLVFTATVSES. 3 cysteine pairs are disulfide-bonded: C39/C59, C45/C64, and C51/C66.

It belongs to the DEFL family.

The protein resides in the secreted. The sequence is that of Defensin-like protein 287 from Arabidopsis thaliana (Mouse-ear cress).